Consider the following 1201-residue polypeptide: MLDVNNFEYMKIGLASPDKIRSWSHGEVKKPETINYRTLKPERDGLFCERIFGPMKDWECSCGKYKRVRYKGVVCDRCGVEVTKSKVRRERMGHIELAAPVSHIWYFKGIPSRMGLVMDMSPRALEEIIYFASYVVTEPGDTPLEKKQLLSEREYRVYREKYGKGFSAGMGAEAIKKILADIDLEKETNDLKEELKSAQGQRRTRAIRRLEVMEAFRNSGNNPSWMVLDVLPVIPPEIRPMVQLEGGRFATSDLNDLYRRVINRNNRLKRLLDLGAPNIIVQNEKRMLQEAVDALIDNGRRGRPVTGPGNRPLKSLSHMLKGKQGRFRQNLLGKRVDYSGRSVIVVGPNLKMYQCGLPKEMALELFKPFVMKELVGRGLAHNIKSAKRKIERMAPEIWDVLEEVIREHPVLLNRAPTLHRLGIQAFEPTLVEGRAIRLHPLVCTAYNADFDGDQMAVHVPLSAEAQAEARILMLAAQNILNPKDGKPVVTPSQDMVLGNYYLTLERENAVGEGTIFKDINEAQLAYQNGYVHLHSRIAVFAGSIPNERFTDEQRKQLLITTVGKLIFNTILPKSFPYINEPTKFNLEIETPAKYFVDTTTDVRAHIAAQELIDPFKKKILGNIIAEVFKKFHITETSKMLDRMKDLGFKISTKAGMTVGIADILTLEEKHEILEKAHDTVEKITKSFRRGLITDDERYERVIGVWNAAKDEIQGKLILSLDRLNPIFMMQDSGARGNISNFTQLAGMRGLMADPSGRIVELPITSNFREGLTVLEYFISTHGARKGLTDTALKTADSGYLTRRLVDVAQDVIIREDDCGTDRGLTIKAIREGTEIIEPLEERLEGRYSRKTIRHPETKEVIARENDLITEAIATQIVDAGIEEVTIRSAFTCNTKHGVCKKCYGKNLATGTEVEVGEAVGIIAAQSIGEPGTQLTMRTFHTGGVAGDDITQGLPRIQEIFEARNPKGQAIITEVGGEVVSIEEGRDRQQEITIQGTDDRRSYNIPYTARLRVEEGSIVERGEALTEGSVDPKALIRVRDVLSVQEYLLAEVQKVYRMQGVEIGDKHVEVMVRQMLRKIRVMDTGDTNILPGTLMDIHTFTEANRDAILSGSQPATGRPVLLGITKASLETDSFLSAASFQETTRVLTDAAIKGKRDELLGLKENVILGKLVPAGTGIGRYRKLKSEVIKETAEVTDEITNI.

Zn(2+)-binding residues include Cys60, Cys62, Cys75, and Cys78. Residues Asp449, Asp451, and Asp453 each contribute to the Mg(2+) site. Zn(2+) contacts are provided by Cys818, Cys892, Cys899, and Cys902.

Belongs to the RNA polymerase beta' chain family. The RNAP catalytic core consists of 2 alpha, 1 beta, 1 beta' and 1 omega subunit. When a sigma factor is associated with the core the holoenzyme is formed, which can initiate transcription. The cofactor is Mg(2+). Zn(2+) serves as cofactor.

It catalyses the reaction RNA(n) + a ribonucleoside 5'-triphosphate = RNA(n+1) + diphosphate. In terms of biological role, DNA-dependent RNA polymerase catalyzes the transcription of DNA into RNA using the four ribonucleoside triphosphates as substrates. This chain is DNA-directed RNA polymerase subunit beta', found in Listeria innocua serovar 6a (strain ATCC BAA-680 / CLIP 11262).